The following is a 565-amino-acid chain: Genetic interactor of prohibitins 3, mitochondrial (565 aa).

One can recognise a CP-type G domain in the interval 129–315 (TDVLEKIPRG…IYDLPGFTTN (187 aa)).

Belongs to the TRAFAC class YlqF/YawG GTPase family. GEP3 subfamily.

It is found in the mitochondrion. In terms of biological role, may be involved in the mitochondrial lipid metabolism. The protein is Genetic interactor of prohibitins 3, mitochondrial (GEP3) of Zygosaccharomyces rouxii (strain ATCC 2623 / CBS 732 / NBRC 1130 / NCYC 568 / NRRL Y-229).